The chain runs to 606 residues: Polyphenol oxidase A1, chloroplastic (606 aa).

The transit peptide at methionine 1–alanine 92 directs the protein to the chloroplast. The tract at residues lysine 32–leucine 63 is disordered. The segment covering glutamine 35 to arginine 44 has biased composition (basic residues). Disulfide bonds link cysteine 103/cysteine 121 and cysteine 120/cysteine 182. Cu cation is bound by residues histidine 181, histidine 202, histidine 211, histidine 333, histidine 337, and histidine 367. The segment at residues cysteine 185–histidine 202 is a cross-link (2'-(S-cysteinyl)-histidine (Cys-His)).

Belongs to the tyrosinase family. The cofactor is Cu(2+).

The protein localises to the plastid. It is found in the chloroplast thylakoid lumen. The enzyme catalyses 2 catechol + O2 = 2 1,2-benzoquinone + 2 H2O. Functionally, catalyzes the oxidation of mono- and o-diphenols to o-diquinones. The sequence is that of Polyphenol oxidase A1, chloroplastic from Vicia faba (Broad bean).